The sequence spans 576 residues: Mitogen-activated protein kinase 15 (576 aa).

The interval 20–50 (RPSSSSSSNNHDQIQNPPTVSNPNDDEDLKK) is disordered. The segment covering 28 to 42 (NNHDQIQNPPTVSNP) has biased composition (polar residues). One can recognise a Protein kinase domain in the interval 90–381 (YQIQEVVGKG…AEEALADPYF (292 aa)). Residues 96–104 (VGKGSYGVV) and Lys-119 contribute to the ATP site. Asp-216 acts as the Proton acceptor in catalysis. Thr-252 bears the Phosphothreonine mark. A TXY motif is present at residues 252–254 (TDY). Tyr-254 carries the phosphotyrosine modification. Thr-257 carries the post-translational modification Phosphothreonine. The segment at 458–535 (EENQGPGGRS…GGGYSARNLM (78 aa)) is disordered. The span at 477 to 501 (LPRERVPASKNETVEERSNDIERRT) shows a compositional bias: basic and acidic residues. Residues 504-520 (AVASTLDSPKASQQAEG) show a composition bias toward polar residues.

The protein belongs to the protein kinase superfamily. CMGC Ser/Thr protein kinase family. MAP kinase subfamily. As to quaternary structure, interacts with MKK7. Dually phosphorylated on Thr-252 and Tyr-254, which activates the enzyme.

The catalysed reaction is L-seryl-[protein] + ATP = O-phospho-L-seryl-[protein] + ADP + H(+). It carries out the reaction L-threonyl-[protein] + ATP = O-phospho-L-threonyl-[protein] + ADP + H(+). Activated by threonine and tyrosine phosphorylation. The polypeptide is Mitogen-activated protein kinase 15 (MPK15) (Arabidopsis thaliana (Mouse-ear cress)).